Reading from the N-terminus, the 213-residue chain is Thiamine-phosphate synthase (213 aa).

Residues 40–44 (QYRDK) and asparagine 72 each bind 4-amino-2-methyl-5-(diphosphooxymethyl)pyrimidine. Mg(2+) is bound by residues aspartate 73 and aspartate 91. Residue threonine 110 participates in 4-amino-2-methyl-5-(diphosphooxymethyl)pyrimidine binding. 137 to 139 (SHT) lines the 2-[(2R,5Z)-2-carboxy-4-methylthiazol-5(2H)-ylidene]ethyl phosphate pocket. Lysine 140 serves as a coordination point for 4-amino-2-methyl-5-(diphosphooxymethyl)pyrimidine. Glycine 167 contributes to the 2-[(2R,5Z)-2-carboxy-4-methylthiazol-5(2H)-ylidene]ethyl phosphate binding site.

The protein belongs to the thiamine-phosphate synthase family. It depends on Mg(2+) as a cofactor.

The catalysed reaction is 2-[(2R,5Z)-2-carboxy-4-methylthiazol-5(2H)-ylidene]ethyl phosphate + 4-amino-2-methyl-5-(diphosphooxymethyl)pyrimidine + 2 H(+) = thiamine phosphate + CO2 + diphosphate. It catalyses the reaction 2-(2-carboxy-4-methylthiazol-5-yl)ethyl phosphate + 4-amino-2-methyl-5-(diphosphooxymethyl)pyrimidine + 2 H(+) = thiamine phosphate + CO2 + diphosphate. It carries out the reaction 4-methyl-5-(2-phosphooxyethyl)-thiazole + 4-amino-2-methyl-5-(diphosphooxymethyl)pyrimidine + H(+) = thiamine phosphate + diphosphate. It participates in cofactor biosynthesis; thiamine diphosphate biosynthesis; thiamine phosphate from 4-amino-2-methyl-5-diphosphomethylpyrimidine and 4-methyl-5-(2-phosphoethyl)-thiazole: step 1/1. Its function is as follows. Condenses 4-methyl-5-(beta-hydroxyethyl)thiazole monophosphate (THZ-P) and 2-methyl-4-amino-5-hydroxymethyl pyrimidine pyrophosphate (HMP-PP) to form thiamine monophosphate (TMP). This Stutzerimonas stutzeri (strain A1501) (Pseudomonas stutzeri) protein is Thiamine-phosphate synthase.